The following is a 316-amino-acid chain: GPI-specific phospholipase A2-like PGAP3 (316 aa).

Positions 1-19 (MFLAAAAFLLSAPASASQG) are cleaved as a signal peptide. At 20-97 (DKEPVYRDCV…GKWPFARFLC (78 aa)) the chain is on the lumenal side. N36 carries an N-linked (GlcNAc...) asparagine glycan. Residues 98–118 (FEEPASALASLLNGLACLLML) form a helical membrane-spanning segment. Topologically, residues 119 to 131 (LRYRSAVPCQSPM) are cytoplasmic. The helical transmembrane segment at 132–152 (YHTITAFSLVSLNAWFWSTVF) threads the bilayer. The Lumenal portion of the chain corresponds to 153 to 165 (HTRDTYLTEKMDY). Residues 166–186 (FCASAVILYSIYLCCVRTLGL) form a helical membrane-spanning segment. At 187–194 (RRPAISSM) the chain is on the cytoplasmic side. The chain crosses the membrane as a helical span at residues 195 to 215 (VGVLLILAFTSHVSYLTFVSF). At 216–220 (DYGYN) the chain is on the lumenal side. Residues 221–241 (MAANASIGIINLLWWLCWCWL) form a helical membrane-spanning segment. At 242–254 (NRRILPYWWRCGM) the chain is on the cytoplasmic side. Residues 255–275 (VVLLLHGLALLELLDFPPLFW) traverse the membrane as a helical segment. Residues 276–278 (VLD) are Lumenal-facing. A helical membrane pass occupies residues 279–299 (AHAVWHLSTVPVHFLFYSFLI). At 300 to 316 (DDSLHLLNTEKPGVKLD) the chain is on the cytoplasmic side.

It belongs to the PGAP3 family.

Its subcellular location is the golgi apparatus membrane. Functionally, involved in the fatty acid remodeling steps of GPI-anchor maturation where the unsaturated acyl chain at sn-2 of inositol phosphate is replaced by a saturated stearoyl chain. May catalyze the first step of the fatty acid remodeling, by removing the unsaturated acyl chain at sn-2 of inositol phosphate, generating a lyso-GPI intermediate. The fatty acid remodeling steps is critical for the integration of GPI-APs into lipid rafts. The chain is GPI-specific phospholipase A2-like PGAP3 from Danio rerio (Zebrafish).